Reading from the N-terminus, the 146-residue chain is Hemoglobin subunit beta (146 aa).

Val-1 is modified (N-acetylvaline). The 145-residue stretch at 2–146 (DLTAEEKAAV…VANALAHKYH (145 aa)) folds into the Globin domain. Ser-44 is subject to Phosphoserine. At Lys-59 the chain carries N6-acetyllysine. Residue His-63 coordinates heme b. N6-acetyllysine is present on Lys-82. Heme b is bound at residue His-92. S-nitrosocysteine is present on Cys-93. Residue Lys-144 is modified to N6-acetyllysine.

Belongs to the globin family. As to quaternary structure, heterotetramer of two alpha chains and two beta chains. In terms of tissue distribution, red blood cells.

Functionally, involved in oxygen transport from the lung to the various peripheral tissues. This Rhinoceros unicornis (Greater Indian rhinoceros) protein is Hemoglobin subunit beta (HBB).